We begin with the raw amino-acid sequence, 431 residues long: MQIYVVKQGDTLSAIASQYRTTTNDITETNEIPNPDSLVVGQTIVIPIAGQFYDVKRGDTLTSIARQFNTTAAELARVNRIQLNTVLQIGFRLYIPPAPKRDIESNAYLEPRGNQVSENLQQAAREASPYLTYLGAFSFQAQRNGTLVAPPLTNLRSITESQNTTLMMIITNLENQAFSDELGRILLNDETVKRRLLNEIVENARRYGFRDIHFDFEYLRPQDREAYNQFLREARDLFHREGLEISTALAPKTSATQQGRWYEAHDYRAHGEIVDFVVLMTYEWGYSGGPPQAVSPIGPVRDVIEYALTEMPANKIVMGQNLYGYDWTLPYTAGGTPARAVSPQQAIVIADQNNASIQYDQTAQAPFFRYTDAENRRHEVWFEDARSIQAKFNLIKELNLRGISYWKLGLSFPQNWLLLSDQFNVVKKTFR.

2 consecutive LysM domains span residues 2–46 (QIYV…TIVI) and 51–95 (QFYD…RLYI). In terms of domain architecture, GH18 spans 103-431 (IESNAYLEPR…QFNVVKKTFR (329 aa)). Chitin is bound by residues 148 to 149 (VA) and 174 to 177 (ENQA). E217 (proton donor) is an active-site residue. Chitin is bound by residues Y218, 280–283 (MTYE), and W406.

Belongs to the glycosyl hydrolase 18 family. Chitinase class II subfamily.

It is found in the spore coat. Its function is as follows. N-acetylglucosaminidase involved in cortex peptidoglycan degradation during germination. Cleaves only partially degraded spore peptidoglycans. Recognizes muramic acid delta-lactam residues specific to spore peptidoglycans. This chain is Cortical fragment-lytic enzyme, found in Bacillus subtilis (strain 168).